The chain runs to 356 residues: Retinoic acid-induced protein 3 (356 aa).

The Extracellular portion of the chain corresponds to M1–T35. A helical membrane pass occupies residues L36–C56. Residues K57–P68 lie on the Cytoplasmic side of the membrane. A helical membrane pass occupies residues A69–I89. Residues K90–F101 are Extracellular-facing. A helical membrane pass occupies residues L102–I122. Residues K123 to L131 lie on the Cytoplasmic side of the membrane. A helical transmembrane segment spans residues S132 to I152. The Extracellular portion of the chain corresponds to E153–D178. The N-linked (GlcNAc...) asparagine glycan is linked to N160. The chain crosses the membrane as a helical span at residues F179–L199. Over V200 to H214 the chain is Cytoplasmic. Residues I215 to I235 form a helical membrane-spanning segment. Over P236–D244 the chain is Extracellular. Residues T245–P265 form a helical membrane-spanning segment. At E266–S356 the chain is on the cytoplasmic side. S303 bears the Phosphoserine mark. 2 positions are modified to phosphotyrosine: Y318 and Y321. The segment at I336 to S356 is disordered. The residue at position 344 (S344) is a Phosphoserine. Phosphotyrosine occurs at positions 346 and 349.

It belongs to the G-protein coupled receptor 3 family. Interacts (via its transmembrane domain) with EGFR. Phosphorylated in two conserved double-tyrosine motifs, Tyr 318/Tyr-321 and Tyr-346/Tyr-349 by EGFR. Tyr-318 and Tyr-321 are the preferred residues responsible for EGFR-mediated GPRC5A phosphorylation. Expressed predominantly in normal fetal and adult lung. Almost undetectable or expressed at very low levels in other tissues.

Its subcellular location is the cell membrane. In terms of biological role, orphan receptor. Could be involved in modulating differentiation and maintaining homeostasis of epithelial cells. This retinoic acid-inducible GPCR provides evidence for a possible interaction between retinoid and G-protein signaling pathways. Functions as a negative modulator of EGFR signaling. Acts as a lung tumor suppressor. The polypeptide is Retinoic acid-induced protein 3 (Gprc5a) (Mus musculus (Mouse)).